A 141-amino-acid chain; its full sequence is Putative pre-16S rRNA nuclease (141 aa).

The protein belongs to the YqgF nuclease family.

It is found in the cytoplasm. In terms of biological role, could be a nuclease involved in processing of the 5'-end of pre-16S rRNA. The polypeptide is Putative pre-16S rRNA nuclease (Coxiella burnetii (strain RSA 331 / Henzerling II)).